The chain runs to 205 residues: Heat shock protein beta-11 (205 aa).

Positions 67 to 180 (VSPMTTFKPI…NERVIPITYT (114 aa)) constitute a sHSP domain. A disordered region spans residues 184–205 (KNPALQNSEPENQAVEAEAAEN). Over residues 192–205 (EPENQAVEAEAAEN) the composition is skewed to low complexity.

Belongs to the small heat shock protein (HSP20) family. As to expression, expressed specifically in the rostral-most somites at 24 hpf. At 48 hpf, expression continues in the rostral-most somites and also in the notochord. Somite expression was restricted to the vicinity of the horizontal myoseptum. In adults, expressed in the heart.

In Danio rerio (Zebrafish), this protein is Heat shock protein beta-11 (hspb11).